The sequence spans 209 residues: Uracil phosphoribosyltransferase (209 aa).

Residues arginine 79, arginine 104, and 131-139 (DPMLATGGS) each bind 5-phospho-alpha-D-ribose 1-diphosphate. Uracil contacts are provided by residues isoleucine 194 and 199–201 (GDA). Aspartate 200 lines the 5-phospho-alpha-D-ribose 1-diphosphate pocket.

This sequence belongs to the UPRTase family. The cofactor is Mg(2+).

The catalysed reaction is UMP + diphosphate = 5-phospho-alpha-D-ribose 1-diphosphate + uracil. The protein operates within pyrimidine metabolism; UMP biosynthesis via salvage pathway; UMP from uracil: step 1/1. Allosterically activated by GTP. Functionally, catalyzes the conversion of uracil and 5-phospho-alpha-D-ribose 1-diphosphate (PRPP) to UMP and diphosphate. In Streptococcus sanguinis (strain SK36), this protein is Uracil phosphoribosyltransferase.